The primary structure comprises 134 residues: Mini-ribonuclease 3 (134 aa).

The active site involves D23.

This sequence belongs to the MrnC RNase family. Homodimer. The cofactor is Mg(2+).

Its subcellular location is the cytoplasm. Its function is as follows. Involved in correct processing of both the 5' and 3' ends of 23S rRNA precursor. Processes 30S rRNA precursor transcript even in absence of ribonuclease 3 (Rnc); Rnc processes 30S rRNA into smaller rRNA precursors. The chain is Mini-ribonuclease 3 from Brevibacillus brevis (strain 47 / JCM 6285 / NBRC 100599).